The sequence spans 303 residues: Aliphatic sulfonates import ATP-binding protein SsuB (303 aa).

Positions 39–263 (LHVRQVVKRY…ERGAAGFAQL (225 aa)) constitute an ABC transporter domain. An ATP-binding site is contributed by 71-78 (GRSGCGKS).

Belongs to the ABC transporter superfamily. Aliphatic sulfonates importer (TC 3.A.1.17.2) family. As to quaternary structure, the complex is composed of two ATP-binding proteins (SsuB), two transmembrane proteins (SsuC) and a solute-binding protein (SsuA).

It localises to the cell inner membrane. It carries out the reaction ATP + H2O + aliphatic sulfonate-[sulfonate-binding protein]Side 1 = ADP + phosphate + aliphatic sulfonateSide 2 + [sulfonate-binding protein]Side 1.. Part of the ABC transporter complex SsuABC involved in aliphatic sulfonates import. Responsible for energy coupling to the transport system. The chain is Aliphatic sulfonates import ATP-binding protein SsuB from Cupriavidus necator (strain ATCC 17699 / DSM 428 / KCTC 22496 / NCIMB 10442 / H16 / Stanier 337) (Ralstonia eutropha).